Reading from the N-terminus, the 673-residue chain is MNVSFSTPVQNSTASRLALIQQAAARSGALPPAGQYRGSKLSPFDVSQMSGVSISMVERAKINGPEFVEELEWLRQQTTSRCFLDAEMWTNEILAHLPDKWCAPNTLNLYNQVSELVLDNTRSPMASPASNSLYAPGEDQMPTVKRNHTSRFAQSLIKNKEFRRAAFFLEKTMNGNKLDHFLHFRCLFLAYYQEHLENDAEGIERKTSFAEERSPFSLLYQRMEDKKLRENEDVWFEYLMGLLEVELGLKDLAEKSFRNVVIREPRIWPAWEALSRLIADIEDADKFVTSAEVKSLWMGDWFMTLVLQRFHQHSMAIQKAEQLVTRGMTGLPMIITKIAACSNARHDHDQAISNFEDVRKADPYRLGDLHLLSDSLYIRNDQKKLSTLAIEVYKVHKFRWETCCIVANYHAIRRDSEHAIKFFQRALRLNPGLAALWVLIGHEFMEMKNNAAACVSYRRAIEIDPADHRGWYGLGQMYDIMKMPAYALFYYQEAQKCKPHDSRLLVALGDIYSKLNRIEDAEKCFTGAYLFGDVEGNALWSLAKLHERYSDDNKAAQAFEVFLVVYELVTSAEEKIIYAIAFLANHFFKIEDFDKASEYATKCLAFETLCQEGNRLFREIAKIQARESRLPVEEAPGPSNASAAGGQEAMDTEEAPQEGGEEEMSEGEDDFSF.

10 TPR repeats span residues 86-120 (AEMW…VLDN), 159-195 (NKEF…YQEH), 232-267 (EDVW…EPRI), 332-365 (PMII…DPYR), 400-433 (WETC…NPGL), 434-467 (AALW…DPAD), 469-501 (RGWY…KPHD), 502-535 (SRLL…GDVE), 539-572 (LWSL…VTSA), and 577-610 (IYAI…ETLC). The disordered stretch occupies residues 628–673 (SRLPVEEAPGPSNASAAGGQEAMDTEEAPQEGGEEEMSEGEDDFSF). Residues 635–646 (APGPSNASAAGG) are compositionally biased toward low complexity. Residues 650-673 (MDTEEAPQEGGEEEMSEGEDDFSF) show a composition bias toward acidic residues.

The protein belongs to the APC8/CDC23 family. In terms of assembly, the APC/C complex is probably composed of at least 12 subunits: apc-2, apc-10, apc-11, cdc-26, emb-1, emb-27, emb-30, mat-1, mat-2, mat-3, such-1 and gfi-3.

Its pathway is protein modification; protein ubiquitination. In terms of biological role, probable component of the anaphase promoting complex/cyclosome (APC/C), a cell cycle-regulated E3 ubiquitin ligase that controls progression through mitosis and the G1 phase of the cell cycle. The APC/C complex acts by mediating ubiquitination and subsequent degradation of target proteins. Developmental role in early embryogenesis and the metaphase to anaphase transition in oocyte and spermatocyte meiosis and mitosis in germ cells. Required for embryonic anterior-posterior axis formation. Plays a role in regulating the abundance of glr-1 receptors in postmitotic neurons, which may in turn control animal locomotion. Involved in regulating GABA neurotransmitter release at neuromuscular junctions in GABA motor neurons. This chain is Cell division cycle protein 23 homolog, found in Caenorhabditis elegans.